We begin with the raw amino-acid sequence, 929 residues long: Isoleucine--tRNA ligase (929 aa).

Positions 58 to 68 (PYANGDIHIGH) match the 'HIGH' region motif. Glu563 lines the L-isoleucyl-5'-AMP pocket. The 'KMSKS' region signature appears at 605–609 (KMSKS). Lys608 lines the ATP pocket. Residues Cys892, Cys895, Cys912, and Cys915 each coordinate Zn(2+).

Belongs to the class-I aminoacyl-tRNA synthetase family. IleS type 1 subfamily. In terms of assembly, monomer. Zn(2+) serves as cofactor.

It is found in the cytoplasm. It catalyses the reaction tRNA(Ile) + L-isoleucine + ATP = L-isoleucyl-tRNA(Ile) + AMP + diphosphate. In terms of biological role, catalyzes the attachment of isoleucine to tRNA(Ile). As IleRS can inadvertently accommodate and process structurally similar amino acids such as valine, to avoid such errors it has two additional distinct tRNA(Ile)-dependent editing activities. One activity is designated as 'pretransfer' editing and involves the hydrolysis of activated Val-AMP. The other activity is designated 'posttransfer' editing and involves deacylation of mischarged Val-tRNA(Ile). The sequence is that of Isoleucine--tRNA ligase from Neisseria meningitidis serogroup C / serotype 2a (strain ATCC 700532 / DSM 15464 / FAM18).